A 149-amino-acid polypeptide reads, in one-letter code: Aquaporin-like protein 2 (149 aa).

The disordered stretch occupies residues 1 to 35 (MSNESNDLEKNISHLDPTGVDNAYIPPEQPETKHS). Residues 1-47 (MSNESNDLEKNISHLDPTGVDNAYIPPEQPETKHSRFNIDRDTLRNH) lie on the Cytoplasmic side of the membrane. The chain crosses the membrane as a helical span at residues 48–68 (FIAAVGEFCGTFMFLWCAYVI). Residues 69–89 (CNVANHDVALTTEPEGSHPGQ) are Extracellular-facing. A helical transmembrane segment spans residues 90-110 (LIMIALGFGFSVMFSIWCFWW). Residues 111–149 (GFEPSRFSLFVFGQSHLTSQMCSDVVSSDHCWDGCWWCR) lie on the Cytoplasmic side of the membrane.

This sequence belongs to the MIP/aquaporin (TC 1.A.8) family.

It is found in the endoplasmic reticulum membrane. The protein resides in the cell membrane. Water channel required to facilitate the transport of water across membranes. Involved in freeze tolerance, osmotolerance and cell flocculation in liquid cultures. Is non-functional in most laboratory strains. This Saccharomyces cerevisiae (strain JAY291) (Baker's yeast) protein is Aquaporin-like protein 2 (AQY2-2).